A 142-amino-acid polypeptide reads, in one-letter code: MAPSTKAASAKKAVVKGSNGSKALKVRTSTTFRLPKTLKLTRAPKYARKAVPHYQRLDNYKVIVAPIASETAMKKVEDGNTLVFQVDIKANKHQIKQAVKDLYEVDVLAVNTLIRPNGTKKAYVRLTADHDALDIANKIGYI.

The protein belongs to the universal ribosomal protein uL23 family.

Its function is as follows. This protein binds to a specific region on the 26S rRNA. The protein is Large ribosomal subunit protein uL23 (RPL25) of Cyberlindnera jadinii (Torula yeast).